The chain runs to 307 residues: tRNA pseudouridine synthase B (307 aa).

Residue Asp38 is the Nucleophile of the active site.

Belongs to the pseudouridine synthase TruB family. Type 1 subfamily.

It carries out the reaction uridine(55) in tRNA = pseudouridine(55) in tRNA. Functionally, responsible for synthesis of pseudouridine from uracil-55 in the psi GC loop of transfer RNAs. The chain is tRNA pseudouridine synthase B from Bacillus cereus (strain ATCC 14579 / DSM 31 / CCUG 7414 / JCM 2152 / NBRC 15305 / NCIMB 9373 / NCTC 2599 / NRRL B-3711).